A 248-amino-acid chain; its full sequence is UPF0524 protein C3orf70 homolog (248 aa).

The interval 169 to 248 (KESDTPKLGH…EVIETMETTV (80 aa)) is disordered. Residues 200–227 (SCDEDTEEGAELSSEEDYSPESSWEPDE) show a composition bias toward acidic residues.

This sequence belongs to the UPF0524 family.

In terms of biological role, may play a role in neuronal and neurobehavioral development. The chain is UPF0524 protein C3orf70 homolog from Mus musculus (Mouse).